The primary structure comprises 866 residues: Dynamin-2 (866 aa).

The region spanning histidine 28–proline 294 is the Dynamin-type G domain. The segment at glycine 38–serine 45 is G1 motif. Residues serine 41, glycine 43, lysine 44, serine 45, serine 46, arginine 59, and glycine 60 each coordinate GDP. A G2 motif region spans residues valine 64 to arginine 66. The interval aspartate 136–glycine 139 is G3 motif. The interval threonine 205 to aspartate 208 is G4 motif. 3 residues coordinate GDP: lysine 206, aspartate 208, and aspartate 211. Residue tyrosine 231 is modified to Phosphotyrosine. Positions valine 235–serine 238 are G5 motif. Residues asparagine 236, arginine 237, and glutamine 239 each coordinate GDP. Lysine 299 carries the post-translational modification N6-acetyllysine. Residues glutamine 515–valine 621 form the PH domain. Phosphotyrosine is present on tyrosine 593. Lysine 594 is subject to N6-acetyllysine. One can recognise a GED domain in the interval valine 649–valine 740. The interval threonine 737–aspartate 866 is disordered. The residue at position 751 (threonine 751) is a Phosphothreonine. A compositionally biased stretch (polar residues) spans tryptophan 752–proline 763. Residue serine 760 is modified to Phosphoserine; by CDK1. Pro residues-rich tracts occupy residues threonine 784 to valine 794, proline 802 to histidine 811, and serine 822 to proline 851.

This sequence belongs to the TRAFAC class dynamin-like GTPase superfamily. Dynamin/Fzo/YdjA family. As to quaternary structure, oligomerizes into a helical polymer that self-assembles around the vesicle membrane, when associated to the menbrane through lipid binding. Interacts with SHANK1 and SHANK2. Interacts with SNX9. Interacts (via C-terminal proline-rich domain (PRD)) with SNX18 (via SH3 domain); this interaction regulates ATG9A and ATG16L1 trafficking from recycling endosomes to sites of autophagosome formation. Interacts with SNX33 (via SH3 domain). Interacts with MYO1E (via SH3 domain). Interacts with PSTPIP1 (via SH3 domain). Interacts with CTNND2. Interacts (via C-terminal proline-rich domain (PRD)) with BIN1 (via SH3 domain); this interaction allows the recruitment of DNM2 to the membrane tubules and inhibits self-assembly-stimulated GTPase activity on the membrane. Interacts with GABARAP, GABARAPL1 and GABARAPL2. Interacts with MAP1LC3B (the lipidate and non-lipidated LC3 form); this interaction mediates recycling endosome scission leading to autophagosome release. Interacts with ITSN1. Interacts with MYOF. Interacts (via C-terminal proline-rich domain (PRD)) with SH3BP4 (via SH3 domain); this interaction controls the GTPase activity and is prevented by EGFR-induced tyrosine phosphorylation of either DNM2 or SH3BP4. May interact with PIK3C3. May be a component of a complex composed of RAB5A (in GDP-bound form), DYN2 and PIK3C3. Interacts with SDC4; this interaction is markedly enhanced at focal ahesion site upon induction of focal adhesions and stress-fiber formation. Interacts with ACTN1. Interacts with CTTN; this interaction stimulates the intrinsic GTPase activity of DNM2 and stabilizes the association of DNM2 and actin filaments; in addition this interaction is stimulated by ligand binding to the receptor, leading to the recruitment of the DNM2-CTTN complex to the sequestered receptor-ligand complex to its internalization. Interacts with NOSTRIN (via SH3 domain); this interaction allows the recruitment of NOS3 to dynamin-positive structures. Interacts with TUBG1; this interaction may participate in centrosome cohesion. Phosphorylation at Ser-844 by GSK3-alpha relieves the inhibition of BIN1 and promotes endocytosis. Phosphorylation at Ser-760 by CDK1 is greatly increased upon mitotic entry. It regulates cytokinesis downstream of calcineurin, and does not affect clathrin-mediated endocytosis. Dephosphorylated by calcineurin/PP2 during cytokinesis in a Ca(2+)- and calmodulin-dependent manner. Phosphorylated on tyrosine residues by EGFR and after activation of SRC.

The protein localises to the cytoplasm. It is found in the cytoskeleton. It localises to the cytoplasmic vesicle. The protein resides in the clathrin-coated vesicle. Its subcellular location is the cell projection. The protein localises to the uropodium. It is found in the endosome. It localises to the microtubule organizing center. The protein resides in the centrosome. Its subcellular location is the centriole. The protein localises to the recycling endosome. It is found in the phagocytic cup. It localises to the phagosome membrane. The protein resides in the podosome. Its subcellular location is the cell junction. The protein localises to the postsynaptic density. It is found in the synapse. It localises to the synaptosome. The protein resides in the midbody. Its subcellular location is the membrane. The protein localises to the clathrin-coated pit. The catalysed reaction is GTP + H2O = GDP + phosphate + H(+). Its function is as follows. Catalyzes the hydrolysis of GTP and utilizes this energy to mediate vesicle scission at plasma membrane during endocytosis and filament remodeling at many actin structures during organization of the actin cytoskeleton. Plays an important role in vesicular trafficking processes, namely clathrin-mediated endocytosis (CME), exocytic and clathrin-coated vesicle from the trans-Golgi network, and PDGF stimulated macropinocytosis. During vesicular trafficking process, associates to the membrane, through lipid binding, and self-assembles into ring-like structure through oligomerization to form a helical polymer around the vesicle membrane and leading to vesicle scission. Plays a role in organization of the actin cytoskeleton by mediating arrangement of stress fibers and actin bundles in podocytes. During organization of the actin cytoskeleton, self-assembles into ring-like structure that directly bundles actin filaments to form typical membrane tubules decorated with dynamin spiral polymers. Self-assembly increases GTPase activity and the GTP hydrolysis causes the rapid depolymerization of dynamin spiral polymers, and results in dispersion of actin bundles. Remodels, through its interaction with CTTN, bundled actin filaments in a GTPase-dependent manner and plays a role in orchestrating the global actomyosin cytoskeleton. The interaction with CTTN stabilizes the interaction of DNM2 and actin filaments and stimulates the intrinsic GTPase activity that results in actin filament-barbed ends and increases the sensitivity of filaments in bundles to the actin depolymerizing factor, CFL1. Plays a role in the autophagy process, by participating in the formation of ATG9A vesicles destined for the autophagosomes through its interaction with SNX18, by mediating recycling endosome scission leading to autophagosome release through MAP1LC3B interaction. Also regulates maturation of apoptotic cell corpse-containing phagosomes by recruiting PIK3C3 to the phagosome membrane. Also plays a role in cytokinesis. May participate in centrosome cohesion through its interaction with TUBG1. Plays a role in the regulation of neuron morphology, axon growth and formation of neuronal growth cones. Involved in membrane tubulation. This chain is Dynamin-2, found in Bos taurus (Bovine).